The following is a 134-amino-acid chain: Protein NrdI (134 aa).

The protein belongs to the NrdI family.

Probably involved in ribonucleotide reductase function. This chain is Protein NrdI, found in Rhizobium etli (strain CIAT 652).